Consider the following 506-residue polypeptide: Anaerobic nitric oxide reductase transcription regulator NorR (506 aa).

At aspartate 57 the chain carries 4-aspartylphosphate. The Sigma-54 factor interaction domain occupies 187 to 416 (MIGLSPAMTQ…LEHAIHRAVV (230 aa)). ATP is bound by residues 215–222 (GETGTGKE) and 278–287 (ADNGTLFLDE). Positions 481–500 (WAASARALETDVANLHRLAK) form a DNA-binding region, H-T-H motif.

It functions in the pathway nitrogen metabolism; nitric oxide reduction. In terms of biological role, required for the expression of anaerobic nitric oxide (NO) reductase, acts as a transcriptional activator for at least the norVW operon. Activation also requires sigma-54. In Salmonella paratyphi A (strain ATCC 9150 / SARB42), this protein is Anaerobic nitric oxide reductase transcription regulator NorR.